We begin with the raw amino-acid sequence, 640 residues long: Endoglucanase 1 (640 aa).

The signal sequence occupies residues 1–24 (MARRGGAAASSSMANLLGVALVLA). The Nucleophile role is filled by D94. Residues H433, D485, and E494 contribute to the active site. 2 N-linked (GlcNAc...) asparagine glycosylation sites follow: N528 and N548.

This sequence belongs to the glycosyl hydrolase 9 (cellulase E) family. As to expression, expressed in roots, leaf sheaths and flowers.

It is found in the secreted. The enzyme catalyses Endohydrolysis of (1-&gt;4)-beta-D-glucosidic linkages in cellulose, lichenin and cereal beta-D-glucans.. The protein is Endoglucanase 1 (GLU7) of Oryza sativa subsp. japonica (Rice).